A 1770-amino-acid polypeptide reads, in one-letter code: Transposon Ty2-F Gag-Pol polyprotein (1770 aa).

3 stretches are compositionally biased toward polar residues: residues 1–11 (MESQQLHQNPH), 19–39 (ASVT…SASN), and 49–60 (KVNSQQETTPGT). 2 disordered regions span residues 1 to 86 (MESQ…GQYQ) and 359 to 453 (QHSE…LPDH). The tract at residues 295–397 (ENNINVSDRL…SSKPRAAKAH (103 aa)) is RNA-binding. Positions 369-381 (TSPNTTNTKVTTR) are enriched in low complexity. Polar residues-rich tracts occupy residues 399–408 (IATSSKFSRV) and 415–435 (ESTV…GQQQ). Catalysis depends on Asp-457, which acts as the For protease activity; shared with dimeric partner. Positions 579–636 (NVNKSKSVNKYPYPLIHRMLGHANFRSIQKSLKKNAVTYLKESDIEWSNASTYQCPDC) are integrase-type zinc finger-like. The Integrase catalytic domain occupies 656 to 831 (ESYEPFQYLH…AGLDITTILP (176 aa)). The Mg(2+) site is built by Asp-667 and Asp-732. 4 disordered regions span residues 1004-1034 (MGGT…STNE), 1059-1135 (TEEP…KSSK), 1146-1165 (LPLP…VSKD), and 1170-1205 (HSRQ…TEIE). Composition is skewed to polar residues over residues 1009-1034 (ESDT…STNE) and 1065-1082 (QRNS…STPS). Basic and acidic residues predominate over residues 1151–1165 (LTHKSPTDTSDVSKD). The short motif at 1193-1227 (KKRSLEDNETEIEVSRDTWNNKNMRSLEPPRSKKR) is the Bipartite nuclear localization signal element. The 139-residue stretch at 1353-1491 (NDYYITQLDI…DILGLEIKYQ (139 aa)) folds into the Reverse transcriptase Ty1/copia-type domain. 6 residues coordinate Mg(2+): Asp-1361, Asp-1442, Asp-1443, Asp-1625, Glu-1667, and Asp-1700. In terms of domain architecture, RNase H Ty1/copia-type spans 1625-1767 (DASYGNQPYY…IKTFKLLTNK (143 aa)).

As to quaternary structure, the capsid protein forms a homotrimer, from which the VLPs are assembled. The protease is a homodimer, whose active site consists of two apposed aspartic acid residues. In terms of processing, initially, virus-like particles (VLPs) are composed of the structural unprocessed proteins Gag and Gag-Pol, and also contain the host initiator methionine tRNA (tRNA(i)-Met) which serves as a primer for minus-strand DNA synthesis, and a dimer of genomic Ty RNA. Processing of the polyproteins occurs within the particle and proceeds by an ordered pathway, called maturation. First, the protease (PR) is released by autocatalytic cleavage of the Gag-Pol polyprotein, and this cleavage is a prerequisite for subsequent processing at the remaining sites to release the mature structural and catalytic proteins. Maturation takes place prior to the RT reaction and is required to produce transposition-competent VLPs.

It localises to the cytoplasm. The protein localises to the nucleus. The enzyme catalyses DNA(n) + a 2'-deoxyribonucleoside 5'-triphosphate = DNA(n+1) + diphosphate. It carries out the reaction Endonucleolytic cleavage to 5'-phosphomonoester.. Functionally, capsid protein (CA) is the structural component of the virus-like particle (VLP), forming the shell that encapsulates the retrotransposons dimeric RNA genome. The particles are assembled from trimer-clustered units and there are holes in the capsid shells that allow for the diffusion of macromolecules. CA also has nucleocapsid-like chaperone activity, promoting primer tRNA(i)-Met annealing to the multipartite primer-binding site (PBS), dimerization of Ty2 RNA and initiation of reverse transcription. In terms of biological role, the aspartyl protease (PR) mediates the proteolytic cleavages of the Gag and Gag-Pol polyproteins after assembly of the VLP. Reverse transcriptase/ribonuclease H (RT) is a multifunctional enzyme that catalyzes the conversion of the retro-elements RNA genome into dsDNA within the VLP. The enzyme displays a DNA polymerase activity that can copy either DNA or RNA templates, and a ribonuclease H (RNase H) activity that cleaves the RNA strand of RNA-DNA heteroduplexes during plus-strand synthesis and hydrolyzes RNA primers. The conversion leads to a linear dsDNA copy of the retrotransposon that includes long terminal repeats (LTRs) at both ends. Its function is as follows. Integrase (IN) targets the VLP to the nucleus, where a subparticle preintegration complex (PIC) containing at least integrase and the newly synthesized dsDNA copy of the retrotransposon must transit the nuclear membrane. Once in the nucleus, integrase performs the integration of the dsDNA into the host genome. The protein is Transposon Ty2-F Gag-Pol polyprotein (TY2B-F) of Saccharomyces cerevisiae (strain ATCC 204508 / S288c) (Baker's yeast).